A 151-amino-acid chain; its full sequence is Ribosome maturation factor RimP (151 aa).

It belongs to the RimP family.

It localises to the cytoplasm. In terms of biological role, required for maturation of 30S ribosomal subunits. In Vibrio cholerae serotype O1 (strain ATCC 39541 / Classical Ogawa 395 / O395), this protein is Ribosome maturation factor RimP.